Here is a 348-residue protein sequence, read N- to C-terminus: Phospho-2-dehydro-3-deoxyheptonate aldolase, Trp-sensitive (348 aa).

It belongs to the class-I DAHP synthase family.

The catalysed reaction is D-erythrose 4-phosphate + phosphoenolpyruvate + H2O = 7-phospho-2-dehydro-3-deoxy-D-arabino-heptonate + phosphate. It participates in metabolic intermediate biosynthesis; chorismate biosynthesis; chorismate from D-erythrose 4-phosphate and phosphoenolpyruvate: step 1/7. Its function is as follows. Stereospecific condensation of phosphoenolpyruvate (PEP) and D-erythrose-4-phosphate (E4P) giving rise to 3-deoxy-D-arabino-heptulosonate-7-phosphate (DAHP). The sequence is that of Phospho-2-dehydro-3-deoxyheptonate aldolase, Trp-sensitive (aroH) from Escherichia coli O6:H1 (strain CFT073 / ATCC 700928 / UPEC).